Reading from the N-terminus, the 253-residue chain is Major prion protein (253 aa).

Residues 1–22 (MANLGCWMLVLFVATWSDLGLC) form the signal peptide. The interaction with ADGRG6 stretch occupies residues 23–38 (KKRPKPGGWNTGGSRY). The interaction with GRB2, ERI3 and SYN1 stretch occupies residues 23-230 (KKRPKPGGWN…ESQAYYQRGS (208 aa)). Positions 26 to 108 (PKPGGWNTGG…WNKPSKPKTN (83 aa)) are disordered. A run of 5 repeats spans residues 51–59 (PQGGGGWGQ), 60–67 (PHGGGWGQ), 68–75 (PHGGGWGQ), 76–83 (PHGGGWGQ), and 84–91 (PHGGGWGQ). The 5 X 8 AA tandem repeats of P-H-G-G-G-W-G-Q stretch occupies residues 51-91 (PQGGGGWGQPHGGGWGQPHGGGWGQPHGGGWGQPHGGGWGQ). Gly residues predominate over residues 52–95 (QGGGGWGQPHGGGWGQPHGGGWGQPHGGGWGQPHGGGWGQGGGT). Cu(2+) is bound by residues His61, Gly62, Gly63, His69, Gly70, Gly71, His77, Gly78, Gly79, His85, Gly86, and Gly87. The cysteines at positions 179 and 214 are disulfide-linked. Residues Asn181 and Asn197 are each glycosylated (N-linked (GlcNAc...) asparagine). A lipid anchor (GPI-anchor amidated serine) is attached at Ser230. The propeptide at 231 to 253 (SMVLFSSPPVILLISFLIFLIVG) is removed in mature form.

The protein belongs to the prion family. Monomer and homodimer. Has a tendency to aggregate into amyloid fibrils containing a cross-beta spine, formed by a steric zipper of superposed beta-strands. Soluble oligomers may represent an intermediate stage on the path to fibril formation. Copper binding may promote oligomerization. Interacts with GRB2, APP, ERI3/PRNPIP and SYN1. Mislocalized cytosolically exposed PrP interacts with MGRN1; this interaction alters MGRN1 subcellular location and causes lysosomal enlargement. Interacts with APP. Interacts with KIAA1191. Interacts with ADGRG6.

Its subcellular location is the cell membrane. The protein localises to the golgi apparatus. In terms of biological role, its primary physiological function is unclear. May play a role in neuronal development and synaptic plasticity. May be required for neuronal myelin sheath maintenance. May promote myelin homeostasis through acting as an agonist for ADGRG6 receptor. May play a role in iron uptake and iron homeostasis. Soluble oligomers are toxic to cultured neuroblastoma cells and induce apoptosis (in vitro). Association with GPC1 (via its heparan sulfate chains) targets PRNP to lipid rafts. Also provides Cu(2+) or Zn(2+) for the ascorbate-mediated GPC1 deaminase degradation of its heparan sulfate side chains. The polypeptide is Major prion protein (PRNP) (Gorilla gorilla gorilla (Western lowland gorilla)).